A 158-amino-acid chain; its full sequence is 6,7-dimethyl-8-ribityllumazine synthase (158 aa).

5-amino-6-(D-ribitylamino)uracil contacts are provided by residues F22, 57 to 59, and 84 to 86; these read AYE and TVI. Residue 89–90 participates in (2S)-2-hydroxy-3-oxobutyl phosphate binding; sequence GT. H92 serves as the catalytic Proton donor. F117 lines the 5-amino-6-(D-ribitylamino)uracil pocket. R131 lines the (2S)-2-hydroxy-3-oxobutyl phosphate pocket.

It belongs to the DMRL synthase family. In terms of assembly, forms an icosahedral capsid composed of 60 subunits, arranged as a dodecamer of pentamers.

The catalysed reaction is (2S)-2-hydroxy-3-oxobutyl phosphate + 5-amino-6-(D-ribitylamino)uracil = 6,7-dimethyl-8-(1-D-ribityl)lumazine + phosphate + 2 H2O + H(+). It functions in the pathway cofactor biosynthesis; riboflavin biosynthesis; riboflavin from 2-hydroxy-3-oxobutyl phosphate and 5-amino-6-(D-ribitylamino)uracil: step 1/2. Its function is as follows. Catalyzes the formation of 6,7-dimethyl-8-ribityllumazine by condensation of 5-amino-6-(D-ribitylamino)uracil with 3,4-dihydroxy-2-butanone 4-phosphate. This is the penultimate step in the biosynthesis of riboflavin. The polypeptide is 6,7-dimethyl-8-ribityllumazine synthase (Pectobacterium carotovorum subsp. carotovorum (strain PC1)).